We begin with the raw amino-acid sequence, 554 residues long: Hydroxylamine reductase (554 aa).

[2Fe-2S] cluster contacts are provided by C3, C6, C18, and C25. Hybrid [4Fe-2O-2S] cluster is bound by residues H252, E276, C320, C408, C436, C461, E495, and K497. At C408 the chain carries Cysteine persulfide.

The protein belongs to the HCP family. It depends on [2Fe-2S] cluster as a cofactor. Requires hybrid [4Fe-2O-2S] cluster as cofactor.

The protein resides in the cytoplasm. It catalyses the reaction A + NH4(+) + H2O = hydroxylamine + AH2 + H(+). Its function is as follows. Catalyzes the reduction of hydroxylamine to form NH(3) and H(2)O. The chain is Hydroxylamine reductase from Shewanella pealeana (strain ATCC 700345 / ANG-SQ1).